The primary structure comprises 122 residues: Large ribosomal subunit protein uL14 (122 aa).

This sequence belongs to the universal ribosomal protein uL14 family. Part of the 50S ribosomal subunit. Forms a cluster with proteins L3 and L19. In the 70S ribosome, L14 and L19 interact and together make contacts with the 16S rRNA in bridges B5 and B8.

In terms of biological role, binds to 23S rRNA. Forms part of two intersubunit bridges in the 70S ribosome. The polypeptide is Large ribosomal subunit protein uL14 (Allorhizobium ampelinum (strain ATCC BAA-846 / DSM 112012 / S4) (Agrobacterium vitis (strain S4))).